Here is a 428-residue protein sequence, read N- to C-terminus: MLDIRLFRNEPDTVKSKIELRGDDPKVVDEILELDEQRRKLISATEEMKARRNKVSEEIALKKRNKENADDVIAEMRTLGDDIKEKDSQLNEIDNKMTGILCRIPNLISDDVPQGESDEDNVEVKKWGTPREFSFEPKAHWDIVEELKMADFDRAAKVSGARFVYLTNEGAQLERALMNYMITKHTTQHGYTEMMVPQLVNADTMYGTGQLPKFEEDLFKVEKEGLYTIPTAEVPLTNFYRNEIIQPGVLPEKFTGQSACFRSEAGSAGRDTRGLIRLHQFDKVEMVRFEQPEDSWNALEEMTTNAEAILEELGLPYRRVILCTGDIGFSASKTYDIEVWLPSYNDYKEISSCSNCTDFQARRANIRFKRDKAAKPELAHTLNGSGLAVGRTFAAIVENYQNEDGTVTIPEALVPFMGGKTQISKPVK.

231–233 is a binding site for L-serine; sequence TAE. 262-264 contributes to the ATP binding site; sequence RSE. Glu285 serves as a coordination point for L-serine. 349 to 352 is a binding site for ATP; sequence EISS. L-serine is bound at residue Ser385.

It belongs to the class-II aminoacyl-tRNA synthetase family. Type-1 seryl-tRNA synthetase subfamily. Homodimer. The tRNA molecule binds across the dimer.

It localises to the cytoplasm. It catalyses the reaction tRNA(Ser) + L-serine + ATP = L-seryl-tRNA(Ser) + AMP + diphosphate + H(+). The catalysed reaction is tRNA(Sec) + L-serine + ATP = L-seryl-tRNA(Sec) + AMP + diphosphate + H(+). Its pathway is aminoacyl-tRNA biosynthesis; selenocysteinyl-tRNA(Sec) biosynthesis; L-seryl-tRNA(Sec) from L-serine and tRNA(Sec): step 1/1. Its function is as follows. Catalyzes the attachment of serine to tRNA(Ser). Is also able to aminoacylate tRNA(Sec) with serine, to form the misacylated tRNA L-seryl-tRNA(Sec), which will be further converted into selenocysteinyl-tRNA(Sec). This is Serine--tRNA ligase from Staphylococcus aureus (strain Mu3 / ATCC 700698).